Reading from the N-terminus, the 1218-residue chain is MEENSKKDHRALLNQGEEDELEVFGYRDHNVRKAFCLVASVLTCGGLLLVFYWRPQWRVWANCIPCPLQEADTVLLRTTDEFQRYMRKKVFCLYLSTLKFPVSKKWEESLVADRHSVINQALIKPELKLRCMEVQKIRYVWNDLEKRFQKVGLLEDSNSCSDIHQTFGLGLTSEEQEVRRLVCGPNAIEVEIQPIWKLLVKQVLNPFYVFQAFTLTLWLSQGYIEYSVAIIILTVISIVLSVYDLRQQSVKLHNLVEDHNKVQVTIIVKDKGLEELESRLLVPGDILILPGKFSLPCDAVLIDGSCVVNEGMLTGESIPVTKTPLPQMENTMPWKCHSLEDYRKHVLFCGTEVIQVKPSGQGPVRAVVLQTGYNTAKGDLVRSILYPRPLNFKLYSDAFKFIVFLACLGVMGFFYALGVYMYHGVPPKDTVTMALILLTVTVPPVLPAALTIGNVYAQKRLKKKKIFCISPQRINMCGQINLVCFDKTGTLTEDGLDLWGTVPTADNCFQEAHSFASGQAVPWSPLCAAMASCHSLILLNGTIQGDPLDLKMFEGTAWKMEDCIVDSCKFGTSVSNIIKPGPKASKSPVEAIITLCQFPFSSSLQRMSVIAQLAGENHFHVYMKGAPEMVARFCRSETVPKNFPQELRSYTVQGFRVIALAHKTLKMGNLSEVEHLAREKVESELTFLGLLIMENRLKKETKLVLKELSEARIRTVMITGDNLQTAITVAKNSEMIPPGSQVIIVEADEPEEFVPASVTWQLVENQETGPGKKEIYMHTGNSSTPRGEGGSCYHFAMSGKSYQVIFQHFNSLLPKILVNGTVFARMSPGQKSSLIEEFQKLNYYVGMCGDGANDCGALKAAHAGISLSEQEASVASPFTSKTTNIQCVPHLIREGRAALVSSFGVFKYLTMYGIIQFISALLLYWQLQLFGNYQYLMQDVAITLMVCLTMSSTHAYPKLAPYRPAGQLLSPPLLLSIFLNSCFSCIVQISAFLYVKQQPWYCEVYQYSECFLANQSNFSTNVSLERNWTGNATLIPGSILSFETTTLWPITTINYITVAFIFSKGKPFRKPIYTNYIFSFLLLAALGLTIFILFSDFQVIYRGMELIPTITSWRVLILVVALTQFCVAFFVEDSILQNHELWLLIKREFGFYSKSQYRTWQKKLAEDSTWPPINRTDYSGDGKNGFYINGGYESHEQIPKRKLKLGGQPTEQHFWARL.

A run of 4 helical transmembrane segments spans residues 33–53 (KAFC…VFYW), 222–242 (GYIE…VLSV), 401–421 (FIVF…GVYM), and 433–453 (MALI…LTIG). Residue Asp-486 is the 4-aspartylphosphate intermediate of the active site. Residues Asn-540, Asn-669, and Asn-819 are each glycosylated (N-linked (GlcNAc...) asparagine). Mg(2+) is bound by residues Asp-850 and Asp-854. 6 helical membrane passes run 903-923 (FGVF…ALLL), 940-956 (VAIT…THAY), 973-993 (LLLS…SAFL), 1042-1062 (FETT…AFIF), 1077-1097 (IFSF…FSDF), and 1115-1135 (VLIL…EDSI).

The protein belongs to the cation transport ATPase (P-type) (TC 3.A.3) family. Type V subfamily.

The protein resides in the membrane. It carries out the reaction ATP + H2O = ADP + phosphate + H(+). This Homo sapiens (Human) protein is Probable cation-transporting ATPase 13A5 (ATP13A5).